The chain runs to 472 residues: 3beta,22alpha-dihydroxysteroid 3-dehydrogenase (472 aa).

A helical membrane pass occupies residues 1-21; sequence MAFTAFLLLLSSIAAGFLLLL. C418 provides a ligand contact to heme.

It belongs to the cytochrome P450 family. Heme is required as a cofactor.

The protein localises to the membrane. It catalyses the reaction (22S)-22-hydroxycampesterol + reduced [NADPH--hemoprotein reductase] + O2 = (22S)-22-hydroxycampest-4-en-3-one + oxidized [NADPH--hemoprotein reductase] + 2 H2O + H(+). It carries out the reaction 6-deoxoteasterone + reduced [NADPH--hemoprotein reductase] + O2 = 3-dehydro-6-deoxoteasterone + oxidized [NADPH--hemoprotein reductase] + 2 H2O + H(+). The catalysed reaction is 6-deoxycathasterone + reduced [NADPH--hemoprotein reductase] + O2 = (22S,24R)-22-hydroxy-5alpha-ergostan-3-one + oxidized [NADPH--hemoprotein reductase] + 2 H2O + H(+). The enzyme catalyses (22R,23R)-22,23-dihydroxycampesterol + reduced [NADPH--hemoprotein reductase] + O2 = (22R,23R)-22,23-dihydroxycampest-4-en-3-one + oxidized [NADPH--hemoprotein reductase] + 2 H2O + H(+). It participates in plant hormone biosynthesis; brassinosteroid biosynthesis. In terms of biological role, catalyzes C3-oxidation steps in brassinosteroids biosynthesis. Converts (22S)-22-hydroxycampesterol (22-OHCR) to (22S,24R)-22-hydroxyergost-4-en-3-one (22-hydroxy-campesta-4-en-3-one, 22-OH-4-en-3-one), 6-deoxocathasterone (6-deoxoCT) to (22S,24R)-22-hydroxy-5alpha-ergostan-3-one (22-hydroxy-campesta-3-one, 22-OH-3-one), (22R,23R)-22,23-dihydroxycampesterol (22,23-diOHCR) to (22R,23R)-22,23-dihydroxy-campest-4-en-3-one (22,23-diOH-4-en-3-one), and 6-deoxoteasterone (6-deoxoTE) to 3-dehydro-6-deoxoteasterone (6-deoxo3DT, 6-deoxo-3-DHT). This Arabidopsis thaliana (Mouse-ear cress) protein is 3beta,22alpha-dihydroxysteroid 3-dehydrogenase.